A 297-amino-acid chain; its full sequence is 4-hydroxy-tetrahydrodipicolinate synthase (297 aa).

Thr-49 contacts pyruvate. Residue Tyr-137 is the Proton donor/acceptor of the active site. Lys-166 (schiff-base intermediate with substrate) is an active-site residue. Pyruvate is bound at residue Ile-208.

This sequence belongs to the DapA family. As to quaternary structure, homotetramer; dimer of dimers.

Its subcellular location is the cytoplasm. The catalysed reaction is L-aspartate 4-semialdehyde + pyruvate = (2S,4S)-4-hydroxy-2,3,4,5-tetrahydrodipicolinate + H2O + H(+). Its pathway is amino-acid biosynthesis; L-lysine biosynthesis via DAP pathway; (S)-tetrahydrodipicolinate from L-aspartate: step 3/4. In terms of biological role, catalyzes the condensation of (S)-aspartate-beta-semialdehyde [(S)-ASA] and pyruvate to 4-hydroxy-tetrahydrodipicolinate (HTPA). The polypeptide is 4-hydroxy-tetrahydrodipicolinate synthase (Parabacteroides distasonis (strain ATCC 8503 / DSM 20701 / CIP 104284 / JCM 5825 / NCTC 11152)).